We begin with the raw amino-acid sequence, 376 residues long: Flagellar P-ring protein (376 aa).

The first 29 residues, 1-29, serve as a signal peptide directing secretion; sequence MTQRPFSLLSHLGRICLAAAMLAALPAQA.

It belongs to the FlgI family. The basal body constitutes a major portion of the flagellar organelle and consists of four rings (L,P,S, and M) mounted on a central rod.

It localises to the periplasm. The protein resides in the bacterial flagellum basal body. Assembles around the rod to form the L-ring and probably protects the motor/basal body from shearing forces during rotation. In Bordetella avium (strain 197N), this protein is Flagellar P-ring protein.